A 259-amino-acid polypeptide reads, in one-letter code: MVLIRVLANLLVLQLSYAQKSSELVVGGDECDINEHPFLVALYTSSSSTVHCAGTLINQEWVLTAVHCDRKNIRIKLGMHSKNIRNEDEQIRVPRRKFFCLNTKFPNGKDKDIMLIRLRRPVKNSAHIAPISLPSSPSSPRSRCRIMGWGKISTTEETYPDVPHCAKIFIVKHAWCEALYPWVPADSRTLCAGILQGGKDTCEGDSGGPLICNGQIQGIVSGGSDPCGQRLKPAVYTKVFDYTDWIQSIIAGNTTATCP.

A signal peptide spans 1–18 (MVLIRVLANLLVLQLSYA). A propeptide spanning residues 19-24 (QKSSEL) is cleaved from the precursor. The 227-residue stretch at 25-251 (VVGGDECDIN…YTDWIQSIIA (227 aa)) folds into the Peptidase S1 domain. 6 cysteine pairs are disulfide-bonded: C31/C165, C52/C68, C100/C258, C144/C212, C176/C191, and C202/C227. Residues H67 and D112 each act as charge relay system in the active site. Catalysis depends on S206, which acts as the Charge relay system. N253 carries an N-linked (GlcNAc...) asparagine glycan.

It belongs to the peptidase S1 family. Snake venom subfamily. As to quaternary structure, monomer. Post-translationally, N-glycosylated. Contains 4.4% of hexoses, 4.4% of hexosamines and 3.1% of sialic acids. As to expression, expressed by the venom gland.

It localises to the secreted. The enzyme catalyses Fully activates human clotting factor V by a single cleavage at the 1545-Trp-Tyr-Leu-Arg-|-Ser-Asn-Asn-Gly-1552 bond. Cattle, but not rabbit, factor V is cleaved, and no other proteins of the clotting system are attacked. Esterase activity is observed on Bz-Arg-OEt and Tos-Arg-OMe, and amidase activity on Phe-pipecolyl-Arg-NHPhNO2.. Its activity is regulated as follows. Inhibited by D-Phe-Pro-Arg-chloromethyl ketone (FPRCK) (98%), PMSF (93%), benzamidine (67%), and diisopropylfluorophosphate (DFP). Is not inhibited by BPTI, antithrombin and EDTA. In terms of biological role, venom serine protease that converts factor V (F5) to the active form Va in the presence of calcium ions and phospholipids. It cleaves the Arg(1545)-Ser(1546) linkage in the human factor V molecule. Has hydrolytic activities against BAEE (1.2 U/mg), TAME, and Pro-Phe-Arg-MCA (4.9 U/mg). Shows coagulant activity. The protein is Factor V activator of Macrovipera lebetinus (Levantine viper).